Reading from the N-terminus, the 529-residue chain is Phenylalanine N-monooxygenase (529 aa).

A helical transmembrane segment spans residues 1–21; it reads MLDSTPMLAFIIGLLLLALTM. Cysteine 467 is a heme binding site.

This sequence belongs to the cytochrome P450 family. Heme serves as cofactor.

It is found in the endoplasmic reticulum membrane. The catalysed reaction is L-phenylalanine + 2 reduced [NADPH--hemoprotein reductase] + 2 O2 = (E)-phenylacetaldehyde oxime + 2 oxidized [NADPH--hemoprotein reductase] + CO2 + 3 H2O + 2 H(+). It functions in the pathway secondary metabolite biosynthesis; phenylglucosinolate biosynthesis. Its function is as follows. Converts L-phenylalanine into phenylacetaldoxime, the precursor of benzylglucosinolate (glucotropeolin). The chain is Phenylalanine N-monooxygenase (CYP79A2) from Arabidopsis thaliana (Mouse-ear cress).